The following is a 94-amino-acid chain: Cell division protein FtsB (94 aa).

At 1 to 3 (MRA) the chain is on the cytoplasmic side. Residues 4-21 (FAVLLIIALGWLQYTLWF) form a helical membrane-spanning segment. Residues 22 to 94 (GKNGMEDYAQ…YRIIDENSEE (73 aa)) are Periplasmic-facing. Positions 40-60 (EEVNQGLRNRNGQMFAEIDDL) form a coiled coil.

This sequence belongs to the FtsB family. As to quaternary structure, part of a complex composed of FtsB, FtsL and FtsQ.

It localises to the cell inner membrane. Its function is as follows. Essential cell division protein. May link together the upstream cell division proteins, which are predominantly cytoplasmic, with the downstream cell division proteins, which are predominantly periplasmic. The protein is Cell division protein FtsB of Aliivibrio salmonicida (strain LFI1238) (Vibrio salmonicida (strain LFI1238)).